The primary structure comprises 485 residues: MSTSTTYEKLPLQPLFDTIEELKPKFIERLQKAIAIPSVSSDESLRPKVVEMANFLVDELKTLGFTDIQLKELGTQPPPVQDANLQLPPIVLGRFGNDPAKKTVLVYGHYDVQPALKDDGWKTEPFTMHYDKEKEILYGRGSTDDKGPVVGWLNVIEAHNKLGWELPVNLVVCFEGMEESGSLGLDELVAKEAQNYFKKVDQVTISDNYWLGTTKPVLTYGLRGCNYYQIIIEGPGADLHSGIFGGIIAEPMTDLIKVMSTLVDGSGKILIPGVYDMVAPLTDKEDQLYDSIDFSVEELNAASGSQTSLHDNKKDILKHRWRFPSLSLHGIEGAFSGAGAKTVIPAKVVGKFSIRTVPDIESKKLDDLVFQHITSEFKKLNSPNKFKVELIHDGNYWVSDPFNDSFTAAAKATQDVWNVVPDFTREGGSIPITLTFEKELGVDVLLLPMGRGDDGAHSINEKLDVSNYINGCKTLGGYLHYYGKA.

His109 contacts Zn(2+). Asp111 is an active-site residue. Position 144 (Asp144) interacts with Zn(2+). Glu178 (proton acceptor) is an active-site residue. Residues Glu179, Asp207, and His457 each coordinate Zn(2+).

Belongs to the peptidase M20A family. As to quaternary structure, homodimer. Component of the GSH degradosomal complex. The cofactor is Zn(2+). Mn(2+) serves as cofactor.

It is found in the cytoplasm. In terms of biological role, catalytic component of the GSH degradosomal complex involved in the degradation of glutathione (GSH) and other peptides containing a gamma-glu-X bond. Also functions as a dipeptidase with high specificity for Cys-Gly and no activity toward tri- or tetrapeptides. The sequence is that of Cys-Gly metallodipeptidase DUG1 (DUG1) from Candida albicans (strain SC5314 / ATCC MYA-2876) (Yeast).